The following is a 1968-amino-acid chain: Signal element on autosome protein 2 (1968 aa).

Residues Thr72–Ser88 are compositionally biased toward low complexity. 2 disordered regions span residues Thr72–Gln252 and Gln271–Gln364. The segment covering Ser107–Pro119 has biased composition (basic residues). Composition is skewed to low complexity over residues Gly120–Gln134, His144–Ala165, Asp219–Leu232, and Leu298–Ser338. Over residues Pro346 to Gln362 the composition is skewed to polar residues. The segment at Tyr413–His440 adopts a C2H2-type 1 zinc-finger fold. 2 disordered regions span residues Arg451–Pro499 and Trp538–Pro601. Pro residues predominate over residues Ser452–Ala467. Over residues Phe472–Thr482 the composition is skewed to polar residues. Over residues Leu483–Ser498 the composition is skewed to low complexity. Residues Pro570–Asp594 are compositionally biased toward basic and acidic residues. Residues Phe651 to Thr672 form a C2H2-type 2; degenerate zinc finger. 2 disordered regions span residues Ala681–Lys712 and Val785–Pro854. Residues Thr690–Lys702 show a composition bias toward basic residues. A compositionally biased stretch (low complexity) spans His794 to Gln804. Residues Leu812 to Gly824 show a composition bias toward acidic residues. Positions Arg827–Thr851 are enriched in low complexity. Residues Phe856 to Arg875 form a C2H2-type 3; degenerate zinc finger. Disordered stretches follow at residues Ala882–Ala905, Gly975–Asn1069, Arg1083–Asp1227, and Pro1246–Ala1273. Low complexity-rich tracts occupy residues Gln981–Ile1015, Ile1023–Pro1046, and Pro1108–Gln1131. Positions Pro1136–Gln1146 are enriched in pro residues. Residues Asn1147–Asn1185 are compositionally biased toward low complexity. 2 stretches are compositionally biased toward polar residues: residues Ala1201 to Asn1211 and Gln1251 to Ala1273. Residues Tyr1274–His1297 form a C2H2-type 4 zinc finger. 4 disordered regions span residues Thr1333 to Glu1478, Ser1569 to Gln1608, His1624 to Ser1671, and Ala1769 to Asn1822. Over residues Glu1388–Ser1403 the composition is skewed to basic and acidic residues. Composition is skewed to pro residues over residues Pro1407–Tyr1421 and Leu1429–Gln1445. Over residues Gln1589 to Gln1608 the composition is skewed to low complexity. Residues His1624–Phe1633 are compositionally biased toward polar residues. The segment at Leu1668–Gln1694 adopts a C2H2-type 5; degenerate zinc-finger fold. Over residues Ser1800–Ser1811 the composition is skewed to low complexity. Residues His1826–His1858 form a C2H2-type 6 zinc finger.

Expressed in seam cells, intestine cells, pharyngeal muscles and nerve ring neurons.

The protein resides in the nucleus. The protein localises to the cytoplasm. In terms of biological role, RNA-binding protein, which regulates the expression of proteins required to control developmental timing of events during the L2 to L3 larval stage switch. Binds to the 3'UTR of the transcript of the heterochronic protein lin-28 to post-transcriptionally negatively regulate its expression in certain tissue types in the later larval stages. During larval development, controls the timing of seam cell division and terminal differentiation into adult alae. In vitro, it can also bind to DNA through its first zinc finger. May bind directly or indirectly to the promoter of the sex-determining factor xol-1 to activate its transcription. Its activation of xol-1 transcription controls sex determination and X chromosome dosage compensation to promote male development. Through the negative regulation of lin-28 transcript, it also has a role in the fox-1-sex-1-mediated determination of sexual fate. Acts in the intestine to play a role in regulating adult lifespan. In Caenorhabditis elegans, this protein is Signal element on autosome protein 2.